The chain runs to 256 residues: 5-keto-4-deoxy-D-glucarate aldolase (256 aa).

H50 serves as the catalytic Proton acceptor. Q151 contributes to the substrate binding site. Position 153 (E153) interacts with Mg(2+). Residues S178 and D179 each contribute to the substrate site. Position 179 (D179) interacts with Mg(2+).

Belongs to the HpcH/HpaI aldolase family. KDGluc aldolase subfamily. In terms of assembly, homohexamer; trimer of dimers. Mg(2+) serves as cofactor.

It carries out the reaction 5-dehydro-4-deoxy-D-glucarate = 2-hydroxy-3-oxopropanoate + pyruvate. The catalysed reaction is 2-dehydro-3-deoxy-D-glucarate = 2-hydroxy-3-oxopropanoate + pyruvate. It participates in carbohydrate acid metabolism; galactarate degradation; D-glycerate from galactarate: step 2/3. Catalyzes the reversible retro-aldol cleavage of both 5-keto-4-deoxy-D-glucarate and 2-keto-3-deoxy-D-glucarate to pyruvate and tartronic semialdehyde. This Enterobacter sp. (strain 638) protein is 5-keto-4-deoxy-D-glucarate aldolase.